Here is a 393-residue protein sequence, read N- to C-terminus: uncharacterized protein (393 aa).

The disordered stretch occupies residues 345–393 (PNKWATDDAARREMERTRKARYRAKNRAVADPEDSPPGKRLRRGPKSST). The span at 349-361 (ATDDAARREMERT) shows a compositional bias: basic and acidic residues. Residues 383–393 (KRLRRGPKSST) are compositionally biased toward basic residues.

This is an uncharacterized protein from Ictalurid herpesvirus 1 (strain Auburn) (IcHV-1).